The sequence spans 741 residues: Linoleate 9S-lipoxygenase (741 aa).

The region spanning 1–53 (IPGAFYIKNFMQVEFYLKSLTLEDIPNHGTIHFICNSWIYNSKVYKSDRIFFA) is the PLAT domain. The Lipoxygenase domain maps to 56-741 (TYLPSETPAP…SEEGLTFRGI (686 aa)). The interval 108–144 (ALARPVLGGSTLPYPRRGRTGRPKTKKDPNSEKPSDF) is disordered. Basic residues predominate over residues 123 to 132 (RRGRTGRPKT). The span at 133 to 144 (KKDPNSEKPSDF) shows a compositional bias: basic and acidic residues. Fe cation is bound by residues His407, His412, His598, and Asn602.

This sequence belongs to the lipoxygenase family. Monomer. Requires Fe cation as cofactor.

It is found in the cytoplasm. The enzyme catalyses (9Z,12Z)-octadecadienoate + O2 = (9S)-hydroperoxy-(10E,12Z)-octadecadienoate. It catalyses the reaction (9Z,12Z)-octadecadienoate + O2 = (13S)-hydroperoxy-(9Z,11E)-octadecadienoate. It carries out the reaction (9Z,12Z,15Z)-octadecatrienoate + O2 = (13S)-hydroperoxy-(9Z,11E,15Z)-octadecatrienoate. It functions in the pathway lipid metabolism; oxylipin biosynthesis. Plant lipoxygenase may be involved in a number of diverse aspects of plant physiology including growth and development, pest resistance, and senescence or responses to wounding. It catalyzes the hydroperoxidation of lipids containing a cis,cis-1,4-pentadiene structure. The chain is Linoleate 9S-lipoxygenase from Phaseolus vulgaris (Kidney bean).